Reading from the N-terminus, the 388-residue chain is S-adenosylmethionine synthase (388 aa).

H17 contacts ATP. D19 provides a ligand contact to Mg(2+). K(+) is bound at residue E45. Positions 58 and 106 each coordinate L-methionine. The flexible loop stretch occupies residues 106 to 116 (QSAHIAQGVDK). ATP-binding positions include 166–168 (DAK), D241, 247–248 (RK), A264, and K268. Residue D241 coordinates L-methionine. Position 272 (K272) interacts with L-methionine.

Belongs to the AdoMet synthase family. As to quaternary structure, homotetramer; dimer of dimers. It depends on Mg(2+) as a cofactor. Requires K(+) as cofactor.

The protein resides in the cytoplasm. The catalysed reaction is L-methionine + ATP + H2O = S-adenosyl-L-methionine + phosphate + diphosphate. It participates in amino-acid biosynthesis; S-adenosyl-L-methionine biosynthesis; S-adenosyl-L-methionine from L-methionine: step 1/1. Catalyzes the formation of S-adenosylmethionine (AdoMet) from methionine and ATP. The overall synthetic reaction is composed of two sequential steps, AdoMet formation and the subsequent tripolyphosphate hydrolysis which occurs prior to release of AdoMet from the enzyme. This Cereibacter sphaeroides (strain ATCC 17023 / DSM 158 / JCM 6121 / CCUG 31486 / LMG 2827 / NBRC 12203 / NCIMB 8253 / ATH 2.4.1.) (Rhodobacter sphaeroides) protein is S-adenosylmethionine synthase.